The primary structure comprises 82 residues: Cytochrome b559 subunit alpha (82 aa).

The helical transmembrane segment at 22–36 threads the bilayer; sequence VIHAVTLPSIFLAGY. Histidine 24 contacts heme.

It belongs to the PsbE/PsbF family. As to quaternary structure, heterodimer of an alpha subunit and a beta subunit. PSII is composed of 1 copy each of membrane proteins PsbA, PsbB, PsbC, PsbD, PsbE, PsbF, PsbH, PsbI, PsbJ, PsbK, PsbL, PsbM, PsbT, PsbX, PsbY, Psb30/Ycf12, peripheral proteins PsbO, CyanoQ (PsbQ), PsbU, PsbV and a large number of cofactors. It forms dimeric complexes. Requires heme b as cofactor.

It localises to the cellular thylakoid membrane. Its function is as follows. This b-type cytochrome is tightly associated with the reaction center of photosystem II (PSII). PSII is a light-driven water:plastoquinone oxidoreductase that uses light energy to abstract electrons from H(2)O, generating O(2) and a proton gradient subsequently used for ATP formation. It consists of a core antenna complex that captures photons, and an electron transfer chain that converts photonic excitation into a charge separation. The sequence is that of Cytochrome b559 subunit alpha from Prochlorococcus marinus (strain MIT 9303).